The chain runs to 188 residues: dCTP deaminase (188 aa).

DCTP contacts are provided by residues 111–116 (KSTYAR), 135–137 (TLE), Q156, Y170, K179, and Q180. Residue E137 is the Proton donor/acceptor of the active site.

This sequence belongs to the dCTP deaminase family. As to quaternary structure, homotrimer.

It catalyses the reaction dCTP + H2O + H(+) = dUTP + NH4(+). It functions in the pathway pyrimidine metabolism; dUMP biosynthesis; dUMP from dCTP (dUTP route): step 1/2. Its function is as follows. Catalyzes the deamination of dCTP to dUTP. This is dCTP deaminase from Orientia tsutsugamushi (strain Boryong) (Rickettsia tsutsugamushi).